The primary structure comprises 231 residues: Small ribosomal subunit protein uS3 (231 aa).

The KH type-2 domain occupies 39–107 (IRELLHKELK…DVVINIVEIR (69 aa)).

It belongs to the universal ribosomal protein uS3 family. Part of the 30S ribosomal subunit. Forms a tight complex with proteins S10 and S14.

In terms of biological role, binds the lower part of the 30S subunit head. Binds mRNA in the 70S ribosome, positioning it for translation. The polypeptide is Small ribosomal subunit protein uS3 (Nitrobacter hamburgensis (strain DSM 10229 / NCIMB 13809 / X14)).